Reading from the N-terminus, the 603-residue chain is Adenine deaminase (603 aa).

It belongs to the metallo-dependent hydrolases superfamily. Adenine deaminase family. As to quaternary structure, homodimer. Mn(2+) is required as a cofactor.

It carries out the reaction adenine + H2O + H(+) = hypoxanthine + NH4(+). The protein is Adenine deaminase of Klebsiella pneumoniae subsp. pneumoniae (strain ATCC 700721 / MGH 78578).